The following is a 287-amino-acid chain: 3-alpha-hydroxysteroid sulfotransferase (287 aa).

44 to 49 (KSGTNW) lines the 3'-phosphoadenylyl sulfate pocket. Substrate contacts are provided by W72 and W77. Catalysis depends on H99, which acts as the Proton acceptor. Residues R121, S129, Y184, 218-223 (SSFQFM), and 247-249 (RKG) each bind 3'-phosphoadenylyl sulfate.

The protein belongs to the sulfotransferase 1 family. Homodimer. In terms of tissue distribution, adrenal gland and liver.

It is found in the cytoplasm. It catalyses the reaction an alcohol + 3'-phosphoadenylyl sulfate = an alkyl sulfate + adenosine 3',5'-bisphosphate + H(+). Its function is as follows. Sulfotransferase that utilizes 3'-phospho-5'-adenylyl sulfate (PAPS) as sulfonate donor to catalyze the sulfonation of 3-alpha-hydroxyl groups of neutral steroids. This Cavia porcellus (Guinea pig) protein is 3-alpha-hydroxysteroid sulfotransferase (STD1).